We begin with the raw amino-acid sequence, 319 residues long: Ribosomal protein L11 methyltransferase (319 aa).

Positions 165, 186, 208, and 251 each coordinate S-adenosyl-L-methionine.

The protein belongs to the methyltransferase superfamily. PrmA family.

It is found in the cytoplasm. It carries out the reaction L-lysyl-[protein] + 3 S-adenosyl-L-methionine = N(6),N(6),N(6)-trimethyl-L-lysyl-[protein] + 3 S-adenosyl-L-homocysteine + 3 H(+). Methylates ribosomal protein L11. This Limosilactobacillus reuteri subsp. reuteri (strain JCM 1112) (Lactobacillus reuteri) protein is Ribosomal protein L11 methyltransferase.